The sequence spans 409 residues: Protein naked cuticle homolog 2 (409 aa).

A lipid anchor (N-myristoyl glycine) is attached at Gly2. Positions Ala109 to Val144 constitute an EF-hand domain. Ca(2+) contacts are provided by Asp122, Asp124, Ser126, Lys128, and Asp133. Disordered stretches follow at residues Leu160–Asp224, Thr243–Gly315, Ser346–Ser366, and Arg388–Thr409. 2 stretches are compositionally biased toward basic and acidic residues: residues Ala171–Ser185 and Val193–Asp224. Residues Asp247 to Pro268 show a composition bias toward low complexity. Residues His389 to Thr409 are compositionally biased toward basic residues.

Belongs to the NKD family. In terms of tissue distribution, expressed ubiquitously until 1 dpf, when expression becomes confined to the anterior CNS, with slight expression in the developing tail.

The protein localises to the cell membrane. Its subcellular location is the cytoplasm. In terms of biological role, cell autonomous antagonist of both the canonical and non-canonical Wnt signaling pathways. This is Protein naked cuticle homolog 2 (nkd2) from Danio rerio (Zebrafish).